The chain runs to 171 residues: Putative auxin-responsive protein IAA29 (171 aa).

In terms of domain architecture, PB1 spans 19–114; sequence SRFVKVFMHG…TVKKIYIVPA (96 aa). A disordered region spans residues 117–171; sequence QNENDYQEEEEDNAAAAATADEDGDGAAADDGVAAAADDVDDVAGYTSNDDPSFD. Positions 142 to 153 are enriched in low complexity; it reads GAAADDGVAAAA. Positions 162-171 are enriched in polar residues; it reads YTSNDDPSFD.

It belongs to the Aux/IAA family. Homodimers and heterodimers.

Its subcellular location is the nucleus. Aux/IAA proteins are short-lived transcriptional factors that function as repressors of early auxin response genes at low auxin concentrations. The chain is Putative auxin-responsive protein IAA29 (IAA29) from Oryza sativa subsp. japonica (Rice).